The following is a 167-amino-acid chain: Small ribosomal subunit protein uS5 (167 aa).

Positions 12–75 (LQEKLIAVNR…EKARRNMVTV (64 aa)) constitute an S5 DRBM domain.

It belongs to the universal ribosomal protein uS5 family. As to quaternary structure, part of the 30S ribosomal subunit. Contacts proteins S4 and S8.

With S4 and S12 plays an important role in translational accuracy. Its function is as follows. Located at the back of the 30S subunit body where it stabilizes the conformation of the head with respect to the body. In Shewanella denitrificans (strain OS217 / ATCC BAA-1090 / DSM 15013), this protein is Small ribosomal subunit protein uS5.